The primary structure comprises 77 residues: Acyl carrier protein homolog (77 aa).

Residues 1–76 form the Carrier domain; that stretch reads MSINIKDLIM…DLINAFEDVL (76 aa). S36 carries the post-translational modification O-(pantetheine 4'-phosphoryl)serine.

4'-phosphopantetheine is transferred from CoA to a specific serine of the apo-ACP-like protein.

The protein operates within lipid metabolism; fatty acid biosynthesis. Functionally, carrier of the growing fatty acid chain in fatty acid biosynthesis. This is Acyl carrier protein homolog from Ureaplasma parvum serovar 3 (strain ATCC 700970).